Reading from the N-terminus, the 295-residue chain is Movement protein (295 aa).

The interval 256–295 is disordered; the sequence is KKTNVKEESPTSDPQSGEVSSMTQSVPGAADTRIPKPRRR. A compositionally biased stretch (polar residues) spans 266-281; sequence TSDPQSGEVSSMTQSV.

The protein belongs to the bromovirus movement protein family.

It is found in the host cell junction. It localises to the host plasmodesma. Its function is as follows. Transports viral genome to neighboring plant cells directly through plasmosdesmata, without any budding. The movement protein allows efficient cell to cell propagation, by bypassing the host cell wall barrier. Acts by forming a tubular structure at the host plasmodesmata, enlarging it enough to allow free passage of virion capsids. In Broad bean mottle virus, this protein is Movement protein.